Consider the following 243-residue polypeptide: Protein VERNALIZATION 1 (243 aa).

The MADS-box domain maps to 1 to 61; that stretch reads MGRGKVQLKR…GKLYEFATDS (61 aa). The 91-residue stretch at 88 to 178 folds into the K-box domain; that stretch reads QGNWCHEYRK…QKELVEKQKA (91 aa). Positions 122-178 form a coiled coil; it reads LKELQQLEQQLESSLKHIRSRKNQLMHESISELQRKERSLQEENKALQKELVEKQKA. The tract at residues 173-243 is disordered; sequence VEKQKAHTQQ…PPWMVSHISG (71 aa). Positions 179–192 are enriched in polar residues; it reads HTQQAQWEQTHPQT.

Its subcellular location is the nucleus. In terms of biological role, component of a grass-specific mechanism of vernalization, a process by which prolonged cold exposure provides competence to flower in daylengths longer than 12 hours. Involved in the exit of vernalization and confers flowering competency at the expense of freezing tolerance, probably by promoting the expression of VRN3; this process is essential in cv. Bd29-1 for flowering but seems do not occur in cv. Bd21. This Brachypodium distachyon (Purple false brome) protein is Protein VERNALIZATION 1.